A 648-amino-acid polypeptide reads, in one-letter code: Phosphomethylpyrimidine synthase (648 aa).

Residues Asn-253, Met-282, Tyr-311, His-347, 367-369 (SRG), 408-411 (DGLR), and Glu-447 contribute to the substrate site. A Zn(2+)-binding site is contributed by His-451. Tyr-474 contributes to the substrate binding site. His-515 is a binding site for Zn(2+). [4Fe-4S] cluster contacts are provided by Cys-595, Cys-598, and Cys-603.

This sequence belongs to the ThiC family. Homodimer. [4Fe-4S] cluster serves as cofactor.

The catalysed reaction is 5-amino-1-(5-phospho-beta-D-ribosyl)imidazole + S-adenosyl-L-methionine = 4-amino-2-methyl-5-(phosphooxymethyl)pyrimidine + CO + 5'-deoxyadenosine + formate + L-methionine + 3 H(+). It participates in cofactor biosynthesis; thiamine diphosphate biosynthesis. Its function is as follows. Catalyzes the synthesis of the hydroxymethylpyrimidine phosphate (HMP-P) moiety of thiamine from aminoimidazole ribotide (AIR) in a radical S-adenosyl-L-methionine (SAM)-dependent reaction. The chain is Phosphomethylpyrimidine synthase from Burkholderia thailandensis (strain ATCC 700388 / DSM 13276 / CCUG 48851 / CIP 106301 / E264).